The primary structure comprises 446 residues: Histidine--tRNA ligase (446 aa).

It belongs to the class-II aminoacyl-tRNA synthetase family. Homodimer.

Its subcellular location is the cytoplasm. It carries out the reaction tRNA(His) + L-histidine + ATP = L-histidyl-tRNA(His) + AMP + diphosphate + H(+). The protein is Histidine--tRNA ligase of Burkholderia pseudomallei (strain 1710b).